The chain runs to 179 residues: Large ribosomal subunit protein uL5 (179 aa).

It belongs to the universal ribosomal protein uL5 family. As to quaternary structure, part of the 50S ribosomal subunit; part of the 5S rRNA/L5/L18/L25 subcomplex. Contacts the 5S rRNA and the P site tRNA. Forms a bridge to the 30S subunit in the 70S ribosome.

Its function is as follows. This is one of the proteins that bind and probably mediate the attachment of the 5S RNA into the large ribosomal subunit, where it forms part of the central protuberance. In the 70S ribosome it contacts protein S13 of the 30S subunit (bridge B1b), connecting the 2 subunits; this bridge is implicated in subunit movement. Contacts the P site tRNA; the 5S rRNA and some of its associated proteins might help stabilize positioning of ribosome-bound tRNAs. The sequence is that of Large ribosomal subunit protein uL5 from Chromohalobacter salexigens (strain ATCC BAA-138 / DSM 3043 / CIP 106854 / NCIMB 13768 / 1H11).